Consider the following 554-residue polypeptide: Phosphomethylpyrimidine synthase (554 aa).

Substrate is bound by residues N188, M217, Y246, H282, 302–304 (SRG), 343–346 (DGLR), and E382. Residue H386 participates in Zn(2+) binding. Residue Y409 participates in substrate binding. Residue H450 coordinates Zn(2+). The [4Fe-4S] cluster site is built by C530, C533, and C538.

Belongs to the ThiC family. Homodimer. [4Fe-4S] cluster serves as cofactor.

The catalysed reaction is 5-amino-1-(5-phospho-beta-D-ribosyl)imidazole + S-adenosyl-L-methionine = 4-amino-2-methyl-5-(phosphooxymethyl)pyrimidine + CO + 5'-deoxyadenosine + formate + L-methionine + 3 H(+). It functions in the pathway cofactor biosynthesis; thiamine diphosphate biosynthesis. Functionally, catalyzes the synthesis of the hydroxymethylpyrimidine phosphate (HMP-P) moiety of thiamine from aminoimidazole ribotide (AIR) in a radical S-adenosyl-L-methionine (SAM)-dependent reaction. In Coxiella burnetii (strain RSA 493 / Nine Mile phase I), this protein is Phosphomethylpyrimidine synthase.